Here is a 427-residue protein sequence, read N- to C-terminus: 3-isopropylmalate dehydratase large subunit (427 aa).

C308, C368, and C371 together coordinate [4Fe-4S] cluster.

Belongs to the aconitase/IPM isomerase family. LeuC type 2 subfamily. In terms of assembly, heterodimer of LeuC and LeuD. It depends on [4Fe-4S] cluster as a cofactor.

It catalyses the reaction (2R,3S)-3-isopropylmalate = (2S)-2-isopropylmalate. It functions in the pathway amino-acid biosynthesis; L-leucine biosynthesis; L-leucine from 3-methyl-2-oxobutanoate: step 2/4. Catalyzes the isomerization between 2-isopropylmalate and 3-isopropylmalate, via the formation of 2-isopropylmaleate. The sequence is that of 3-isopropylmalate dehydratase large subunit from Citrifermentans bemidjiense (strain ATCC BAA-1014 / DSM 16622 / JCM 12645 / Bem) (Geobacter bemidjiensis).